The sequence spans 274 residues: Large ribosomal subunit protein uL2 (274 aa).

Residues 224–256 (AMNPIDHPHGGGEGRTGEGRHAVDPWGNLTKGY) are disordered. The segment covering 229 to 246 (DHPHGGGEGRTGEGRHAV) has biased composition (basic and acidic residues).

Belongs to the universal ribosomal protein uL2 family. As to quaternary structure, part of the 50S ribosomal subunit. Forms a bridge to the 30S subunit in the 70S ribosome.

Functionally, one of the primary rRNA binding proteins. Required for association of the 30S and 50S subunits to form the 70S ribosome, for tRNA binding and peptide bond formation. It has been suggested to have peptidyltransferase activity; this is somewhat controversial. Makes several contacts with the 16S rRNA in the 70S ribosome. In Acidovorax sp. (strain JS42), this protein is Large ribosomal subunit protein uL2.